The sequence spans 345 residues: Anthranilate phosphoribosyltransferase (345 aa).

Residues Gly84, 87-88, Thr92, 94-97, 112-120, and Ser124 each bind 5-phospho-alpha-D-ribose 1-diphosphate; these read GD, NIST, and KHGNRSVSS. Gly84 lines the anthranilate pocket. Residue Ser96 participates in Mg(2+) binding. Asn115 provides a ligand contact to anthranilate. Residue Arg170 participates in anthranilate binding. 2 residues coordinate Mg(2+): Asp229 and Glu230.

The protein belongs to the anthranilate phosphoribosyltransferase family. In terms of assembly, homodimer. Mg(2+) serves as cofactor.

The enzyme catalyses N-(5-phospho-beta-D-ribosyl)anthranilate + diphosphate = 5-phospho-alpha-D-ribose 1-diphosphate + anthranilate. Its pathway is amino-acid biosynthesis; L-tryptophan biosynthesis; L-tryptophan from chorismate: step 2/5. Its function is as follows. Catalyzes the transfer of the phosphoribosyl group of 5-phosphorylribose-1-pyrophosphate (PRPP) to anthranilate to yield N-(5'-phosphoribosyl)-anthranilate (PRA). This chain is Anthranilate phosphoribosyltransferase, found in Xanthomonas axonopodis pv. citri (strain 306).